The primary structure comprises 325 residues: Putative gluconeogenesis factor (325 aa).

The protein belongs to the gluconeogenesis factor family.

It is found in the cytoplasm. Its function is as follows. Required for morphogenesis under gluconeogenic growth conditions. The chain is Putative gluconeogenesis factor from Streptococcus pyogenes serotype M3 (strain ATCC BAA-595 / MGAS315).